Reading from the N-terminus, the 165-residue chain is Large ribosomal subunit protein uL10 (165 aa).

It belongs to the universal ribosomal protein uL10 family. In terms of assembly, part of the ribosomal stalk of the 50S ribosomal subunit. The N-terminus interacts with L11 and the large rRNA to form the base of the stalk. The C-terminus forms an elongated spine to which L12 dimers bind in a sequential fashion forming a multimeric L10(L12)X complex.

Forms part of the ribosomal stalk, playing a central role in the interaction of the ribosome with GTP-bound translation factors. The sequence is that of Large ribosomal subunit protein uL10 from Pectobacterium carotovorum subsp. carotovorum (strain PC1).